The chain runs to 840 residues: DNA gyrase subunit A (840 aa).

Residues 51-516 (LPDVRDGFKP…VSSHIDDEDL (466 aa)) form the Topo IIA-type catalytic domain. The active-site O-(5'-phospho-DNA)-tyrosine intermediate is tyrosine 139. The GyrA-box signature appears at 543–549 (QRRGGVG).

Belongs to the type II topoisomerase GyrA/ParC subunit family. Heterotetramer, composed of two GyrA and two GyrB chains. In the heterotetramer, GyrA contains the active site tyrosine that forms a transient covalent intermediate with DNA, while GyrB binds cofactors and catalyzes ATP hydrolysis.

The protein resides in the cytoplasm. It catalyses the reaction ATP-dependent breakage, passage and rejoining of double-stranded DNA.. Its function is as follows. A type II topoisomerase that negatively supercoils closed circular double-stranded (ds) DNA in an ATP-dependent manner to modulate DNA topology and maintain chromosomes in an underwound state. Negative supercoiling favors strand separation, and DNA replication, transcription, recombination and repair, all of which involve strand separation. Also able to catalyze the interconversion of other topological isomers of dsDNA rings, including catenanes and knotted rings. Type II topoisomerases break and join 2 DNA strands simultaneously in an ATP-dependent manner. The sequence is that of DNA gyrase subunit A from Ureaplasma parvum serovar 3 (strain ATCC 700970).